We begin with the raw amino-acid sequence, 526 residues long: Probable carboxypeptidase 2 (526 aa).

The signal sequence occupies residues 1-21 (MVAYRLLALISLGLGSHCASA). N46 carries N-linked (GlcNAc...) asparagine glycosylation. A disordered region spans residues 53 to 76 (PAFTSPGTVPRGFSDGTSGPTRDE). Positions 71 to 351 (GPTRDETMEG…VMAKSILQTA (281 aa)) constitute a Peptidase M14 domain. Residue N116 is glycosylated (N-linked (GlcNAc...) asparagine). H136, E139, and H224 together coordinate Zn(2+). Residue E322 is the Proton donor/acceptor of the active site. N-linked (GlcNAc...) asparagine glycans are attached at residues N393 and N459.

Belongs to the peptidase M14 family. Zn(2+) is required as a cofactor.

The protein localises to the secreted. Functionally, extracellular metalloprotease that contributes to pathogenicity. This is Probable carboxypeptidase 2 (MCPB) from Arthroderma benhamiae (strain ATCC MYA-4681 / CBS 112371) (Trichophyton mentagrophytes).